We begin with the raw amino-acid sequence, 714 residues long: Hormonally up-regulated neu tumor-associated kinase (714 aa).

Over residues 1-16 the composition is skewed to low complexity; that stretch reads MPAAAGDGLLGEPAAP. The segment at 1–28 is disordered; it reads MPAAAGDGLLGEPAAPGGDGGAEDTTRP. Residues 62–320 form the Protein kinase domain; the sequence is LIGSRKLGEG…IQQALANRWL (259 aa). ATP contacts are provided by residues 68–76 and lysine 91; that span reads LGEGSFAKV. The active-site Proton acceptor is aspartate 186. The span at 624-635 shows a compositional bias: basic and acidic residues; sequence HEEKNSPPKEEG. 2 disordered regions span residues 624-658 and 674-714; these read HEEK…NCVK and KRHQ…KGQC. Residues 692–703 are compositionally biased toward polar residues; the sequence is SPLQPTAPSSLS.

The protein belongs to the protein kinase superfamily. CAMK Ser/Thr protein kinase family. SNF1 subfamily.

The catalysed reaction is L-seryl-[protein] + ATP = O-phospho-L-seryl-[protein] + ADP + H(+). It catalyses the reaction L-threonyl-[protein] + ATP = O-phospho-L-threonyl-[protein] + ADP + H(+). The protein is Hormonally up-regulated neu tumor-associated kinase (Hunk) of Mus musculus (Mouse).